The primary structure comprises 81 residues: Photosystem I iron-sulfur center (81 aa).

2 consecutive 4Fe-4S ferredoxin-type domains span residues 2–31 (AHSV…MVPW) and 39–68 (IASA…VRVY). [4Fe-4S] cluster-binding residues include C11, C14, C17, C21, C48, C51, C54, and C58.

In terms of assembly, the eukaryotic PSI reaction center is composed of at least 11 subunits. Requires [4Fe-4S] cluster as cofactor.

The protein localises to the plastid. The protein resides in the chloroplast thylakoid membrane. The enzyme catalyses reduced [plastocyanin] + hnu + oxidized [2Fe-2S]-[ferredoxin] = oxidized [plastocyanin] + reduced [2Fe-2S]-[ferredoxin]. Its function is as follows. Apoprotein for the two 4Fe-4S centers FA and FB of photosystem I (PSI); essential for photochemical activity. FB is the terminal electron acceptor of PSI, donating electrons to ferredoxin. The C-terminus interacts with PsaA/B/D and helps assemble the protein into the PSI complex. Required for binding of PsaD and PsaE to PSI. PSI is a plastocyanin/cytochrome c6-ferredoxin oxidoreductase, converting photonic excitation into a charge separation, which transfers an electron from the donor P700 chlorophyll pair to the spectroscopically characterized acceptors A0, A1, FX, FA and FB in turn. The polypeptide is Photosystem I iron-sulfur center (Pyropia yezoensis (Susabi-nori)).